Consider the following 304-residue polypeptide: Non-specific ribonucleoside hydrolase RihC (304 aa).

Histidine 233 is an active-site residue.

It belongs to the IUNH family. RihC subfamily.

Hydrolyzes both purine and pyrimidine ribonucleosides with a broad-substrate specificity. The polypeptide is Non-specific ribonucleoside hydrolase RihC (Klebsiella pneumoniae (strain 342)).